The sequence spans 519 residues: RxLR effector protein PITG_15278 (519 aa).

An N-terminal signal peptide occupies residues 1–24 (MHFIYRVVLVLAAFALFKVDSISA). Residues 49 to 59 (RQLRVMDDNER) carry the RxLR-dEER motif.

The protein belongs to the RxLR effector family.

It is found in the secreted. The protein resides in the host cytoplasm. Effector that enhances P.infestans colonization of Nicotiana benthamiana leaves. In Phytophthora infestans (strain T30-4) (Potato late blight agent), this protein is RxLR effector protein PITG_15278.